The following is a 62-amino-acid chain: MTFIFQLALFALVALSFLLVVGVPVAFAAPEGWNVTKGYVFQGVSAWFALVFTVGVLNSLVA.

The next 2 membrane-spanning stretches (helical) occupy residues 8–28 and 41–61; these read ALFALVALSFLLVVGVPVAFA and FQGVSAWFALVFTVGVLNSLV.

Belongs to the PsbZ family. PSII is composed of 1 copy each of membrane proteins PsbA, PsbB, PsbC, PsbD, PsbE, PsbF, PsbH, PsbI, PsbJ, PsbK, PsbL, PsbM, PsbT, PsbY, PsbZ, Psb30/Ycf12, at least 3 peripheral proteins of the oxygen-evolving complex and a large number of cofactors. It forms dimeric complexes.

Its subcellular location is the plastid. It localises to the chloroplast thylakoid membrane. Its function is as follows. May control the interaction of photosystem II (PSII) cores with the light-harvesting antenna, regulates electron flow through the 2 photosystem reaction centers. PSII is a light-driven water plastoquinone oxidoreductase, using light energy to abstract electrons from H(2)O, generating a proton gradient subsequently used for ATP formation. This is Photosystem II reaction center protein Z from Nephroselmis olivacea (Green alga).